A 619-amino-acid chain; its full sequence is Very-long-chain aldehyde decarbonylase GL1-1 (619 aa).

5 helical membrane passes run 44 to 64 (LLLLLVLFGVRALTYQLWSSF), 93 to 113 (DNFLILQVHMAAAAFYAFPSL), 123 to 143 (GLAVAALLHVAATEPLFYAAH), 190 to 210 (AAACAAGHGSVALAFAYVLGF), and 322 to 342 (PFLLPMWPFAFLVMLMMWAWS). The Fatty acid hydroxylase domain occupies 129 to 269 (LLHVAATEPL…MPLFDLIGGT (141 aa)).

It belongs to the sterol desaturase family. In terms of assembly, homodimer.

Its subcellular location is the endoplasmic reticulum membrane. The catalysed reaction is a long-chain fatty aldehyde + 2 NADPH + O2 + H(+) = a long-chain alkane + formate + 2 NADP(+) + H2O. Its function is as follows. Aldehyde decarbonylase involved in the conversion of aldehydes to alkanes. Core component of a very-long-chain alkane synthesis complex. This chain is Very-long-chain aldehyde decarbonylase GL1-1, found in Oryza sativa subsp. indica (Rice).